The following is a 2542-amino-acid chain: Ankyrin repeat and KH domain-containing protein 1 (2542 aa).

M1 carries the post-translational modification N-acetylmethionine. The span at 1-10 (MLTDSGGGGT) shows a compositional bias: gly residues. 2 disordered regions span residues 1–44 (MLTD…IRTV) and 50–69 (AGPA…SGTG). The span at 20–29 (APRSAPAGAS) shows a compositional bias: low complexity. Residues 57–69 (GSSGGGGSGSGTG) show a composition bias toward gly residues. Residues S101 and S105 each carry the phosphoserine modification. ANK repeat units follow at residues 204-233 (VDTR…SVNE), 237-266 (EGES…NVED), 271-300 (GDIT…DVNS), 304-333 (TGNT…NIED), 337-366 (NGHT…GINT), 371-400 (FKES…DQEH), 404-433 (EMHT…QVNM), 437-466 (SFES…NLEE), 470-499 (EGYT…NINA), 504-533 (TQET…DIEL), 534-563 (GCST…NVHA), 567-596 (TGDT…DLEH), 600-629 (GGRT…NVNR), 634-663 (NDHT…DPTH), and 667-696 (DGST…NVLS). Residues 775-852 (LECIVEETEG…RQLQMKTQQQ (78 aa)) adopt a coiled-coil conformation. Position 803 is a phosphoserine (S803). 10 ANK repeats span residues 1054–1083 (NHDT…KIEH), 1087–1116 (KGFT…DIEA), 1121–1150 (TKDT…NKEH), 1154–1183 (SDYT…EINS), 1189–1218 (LGIS…DINA), 1223–1252 (NRNT…NVEH), 1256–1285 (TGLT…DVNA), 1291–1320 (SRDT…HIDV), 1324–1353 (KGNT…DVDA), and 1357–1386 (RKIT…QFPS). Residues 1415–1485 (KAKDQQAAEA…ENKPKENSEL (71 aa)) adopt a coiled-coil conformation. 3 disordered regions span residues 1441-1517 (REES…TIGI), 1534-1614 (NVVT…SQEL), and 1632-1664 (SQEE…YKTV). The span at 1453-1463 (REKRKEKRKKK) shows a compositional bias: basic residues. A compositionally biased stretch (basic and acidic residues) spans 1464–1483 (KEEQKRKQEEDEENKPKENS). Residues 1484-1502 (ELPEDEDEEENDEDVEQEV) show a composition bias toward acidic residues. A compositionally biased stretch (low complexity) spans 1503–1517 (PIEPPSATTTTTIGI). S1540 is subject to Phosphoserine. Position 1553 is a phosphothreonine (T1553). Low complexity predominate over residues 1590 to 1603 (NSDSDNLDSTDCNS). Residues 1604 to 1614 (ESSSGGKSQEL) show a composition bias toward polar residues. Residue S1632 is modified to Phosphoserine. Residues 1638–1664 (STATSKTQTRLEGEVTPNSLSTSYKTV) are compositionally biased toward polar residues. T1653 carries the post-translational modification Phosphothreonine. One can recognise a KH domain in the interval 1695 to 1759 (RRSKKLSVPA…ESTRYAVQLI (65 aa)). Disordered stretches follow at residues 1886 to 1923 (NTWG…VLPS), 1987 to 2106 (PSVS…APLT), and 2260 to 2367 (NMHP…IPPP). Residues 1898–1922 (PGNTNSSPKHNNTSRLPNQNGTVLP) show a composition bias toward polar residues. A compositionally biased stretch (low complexity) spans 1987 to 1996 (PSVSSAPITS). Over residues 1997–2019 (GQAPTTFLPASTSQAQLSSQKME) the composition is skewed to polar residues. A compositionally biased stretch (low complexity) spans 2042 to 2077 (CTPSSTANSCSSSASNTPGAPETHPSSSPTPTSSNT). Residues 2078–2106 (QEEAQPSSVSDLSPMSMPFASNSEPAPLT) show a composition bias toward polar residues. Low complexity-rich tracts occupy residues 2285–2308 (LPSI…FSGI) and 2337–2349 (TSAS…APPT).

It belongs to the mask family. As to quaternary structure, interacts with PTPN11. Isoform 2 interacts with HIV-1 VPR. Interacts with NOD2. As to expression, ubiquitous with high expression in cervix, spleen and brain. Expressed in hematopoietic cells with increased expression in leukemia cells. Isoform 2 is highly expressed in spleen with almost no expression in muscle and brain.

Its subcellular location is the cytoplasm. In terms of biological role, may play a role as a scaffolding protein that may be associated with the abnormal phenotype of leukemia cells. Isoform 2 may possess an antiapoptotic effect and protect cells during normal cell survival through its regulation of caspases. The sequence is that of Ankyrin repeat and KH domain-containing protein 1 (ANKHD1) from Homo sapiens (Human).